The chain runs to 104 residues: Small ribosomal subunit protein uS10 (104 aa).

The protein belongs to the universal ribosomal protein uS10 family. As to quaternary structure, part of the 30S ribosomal subunit.

Its function is as follows. Involved in the binding of tRNA to the ribosomes. The protein is Small ribosomal subunit protein uS10 of Ralstonia nicotianae (strain ATCC BAA-1114 / GMI1000) (Ralstonia solanacearum).